Consider the following 135-residue polypeptide: Sex-regulated protein janus-A (135 aa).

Lys37 is a binding site for substrate. Catalysis depends on His63, which acts as the Proton acceptor. Residue Ser104–Gly106 coordinates substrate.

It belongs to the janus family. In terms of tissue distribution, somatic and germline cells. Isoform B is expressed in both sexes and in somatic and germ line cells. Isoform A is expressed in males and is germ line specific.

In terms of biological role, janA and janB regulate somatic sex differentiation. The sequence is that of Sex-regulated protein janus-A (janA) from Drosophila melanogaster (Fruit fly).